The primary structure comprises 91 residues: MEFFTMCMLAAGFGMAIGAFGTGIGQGLAVKNAVEGVSRNPGASGKILTTMMIGLAMIESLAIYVLVVCLIILFANPYKDVAIELAKAVVK.

Transmembrane regions (helical) follow at residues 4 to 24 (FTMC…GTGI) and 53 to 73 (IGLA…LIIL).

This sequence belongs to the ATPase C chain family. As to quaternary structure, F-type ATPases have 2 components, F(1) - the catalytic core - and F(0) - the membrane proton channel. F(1) has five subunits: alpha(3), beta(3), gamma(1), delta(1), epsilon(1). F(0) has three main subunits: a(1), b(2) and c(10-14). The alpha and beta chains form an alternating ring which encloses part of the gamma chain. F(1) is attached to F(0) by a central stalk formed by the gamma and epsilon chains, while a peripheral stalk is formed by the delta and b chains.

Its subcellular location is the cell inner membrane. Functionally, f(1)F(0) ATP synthase produces ATP from ADP in the presence of a proton or sodium gradient. F-type ATPases consist of two structural domains, F(1) containing the extramembraneous catalytic core and F(0) containing the membrane proton channel, linked together by a central stalk and a peripheral stalk. During catalysis, ATP synthesis in the catalytic domain of F(1) is coupled via a rotary mechanism of the central stalk subunits to proton translocation. Key component of the F(0) channel; it plays a direct role in translocation across the membrane. A homomeric c-ring of between 10-14 subunits forms the central stalk rotor element with the F(1) delta and epsilon subunits. The sequence is that of ATP synthase subunit c from Geobacter sulfurreducens (strain ATCC 51573 / DSM 12127 / PCA).